The sequence spans 415 residues: MVFAHRMDNDQPPVVTATLLVPLQNSSCAEAAEALLPHGLMGLHEEHSWMSNRTELQYELNPGEVATASIFFGALWLFSIFGNSLVCLVIHRSRRTQSTTNYFVVSMACADLLISVASTPFVVLQFTTGRWTLGSAMCKVVRYFQYLTPGVQIYVLLSICIDRFYTIVYPLSFKVSREKAKKMIAASWILDAAFVTPVFFFYGSNWDSHCNYFLPPSWEGTAYTVIHFLVGFVIPSILIILFYQKVIKYIWRIGTDGRTLRRTMNIVPRTKVKTVKMFLLLNLVFLFSWLPFHVAQLWHPHEQDYKKSSLVFTAVTWVSFSSSASKPTLYSIYNANFRRGMKETFCMSSMKCYRSNAYTITTSSRMAKRNYVGISEIPPVSRTITKDSIYDSFDREAREKKLAWPINSNPPNTFV.

Topologically, residues 1 to 69 (MVFAHRMDND…LNPGEVATAS (69 aa)) are extracellular. N-linked (GlcNAc...) asparagine glycans are attached at residues asparagine 25 and asparagine 52. A helical membrane pass occupies residues 70 to 90 (IFFGALWLFSIFGNSLVCLVI). At 91–102 (HRSRRTQSTTNY) the chain is on the cytoplasmic side. Residues 103–123 (FVVSMACADLLISVASTPFVV) traverse the membrane as a helical segment. Residues 124–152 (LQFTTGRWTLGSAMCKVVRYFQYLTPGVQ) lie on the Extracellular side of the membrane. Cysteines 138 and 210 form a disulfide. The helical transmembrane segment at 153 to 173 (IYVLLSICIDRFYTIVYPLSF) threads the bilayer. Topologically, residues 174–182 (KVSREKAKK) are cytoplasmic. The helical transmembrane segment at 183-203 (MIAASWILDAAFVTPVFFFYG) threads the bilayer. Over 204–221 (SNWDSHCNYFLPPSWEGT) the chain is Extracellular. Residues 222–242 (AYTVIHFLVGFVIPSILIILF) traverse the membrane as a helical segment. Over 243–277 (YQKVIKYIWRIGTDGRTLRRTMNIVPRTKVKTVKM) the chain is Cytoplasmic. The helical transmembrane segment at 278–298 (FLLLNLVFLFSWLPFHVAQLW) threads the bilayer. The Extracellular segment spans residues 299–309 (HPHEQDYKKSS). The chain crosses the membrane as a helical span at residues 310–332 (LVFTAVTWVSFSSSASKPTLYSI). Over 333-415 (YNANFRRGMK…INSNPPNTFV (83 aa)) the chain is Cytoplasmic.

This sequence belongs to the G-protein coupled receptor 1 family. As to expression, strongly expressed in the brain.

It localises to the cell membrane. Its function is as follows. G-protein coupled receptor that plays a role in the regulation of circadian rhythms and energy metabolism. Participates in maintaining proper circadian gene expression in the suprachiasmatic nucleus (SCN), the locus of the master circadian clock in the brain. May function as a coordinator of aging-associated metabolic dysfunction, stress response, DNA integrity management, and eventual senescence. Upon binding to adropin, modulates mitochondrial energy metabolism via the p44/42-PDK4 signaling pathway, influencing pyruvate dehydrogenase activity. This is Probable G-protein coupled receptor 19 (Gpr19) from Mus musculus (Mouse).